Here is a 189-residue protein sequence, read N- to C-terminus: Hypoxanthine/guanine phosphoribosyltransferase (189 aa).

It belongs to the purine/pyrimidine phosphoribosyltransferase family. Archaeal HPRT subfamily. As to quaternary structure, homodimer.

It localises to the cytoplasm. It carries out the reaction IMP + diphosphate = hypoxanthine + 5-phospho-alpha-D-ribose 1-diphosphate. The enzyme catalyses GMP + diphosphate = guanine + 5-phospho-alpha-D-ribose 1-diphosphate. It participates in purine metabolism; IMP biosynthesis via salvage pathway; IMP from hypoxanthine: step 1/1. In terms of biological role, catalyzes a salvage reaction resulting in the formation of IMP that is energically less costly than de novo synthesis. The polypeptide is Hypoxanthine/guanine phosphoribosyltransferase (hpt) (Methanosarcina acetivorans (strain ATCC 35395 / DSM 2834 / JCM 12185 / C2A)).